The primary structure comprises 333 residues: CMP-N-acetylneuraminate-beta-galactosamide-alpha-2,3-sialyltransferase 4 (333 aa).

Over 1–8 (MTSKSHWK) the chain is Cytoplasmic. The helical; Signal-anchor for type II membrane protein transmembrane segment at 9-26 (LLALALVLVVVMVWYSIS) threads the bilayer. At 27–333 (REDRYIEFFY…MGAVKNLTYF (307 aa)) the chain is on the lumenal side. N61, N131, N310, and N329 each carry an N-linked (GlcNAc...) asparagine glycan. A disulfide bond links C120 and C273.

This sequence belongs to the glycosyltransferase 29 family. Broadly expressed among tissues with highest levels in the small intestine and colon.

The protein resides in the golgi apparatus. It is found in the golgi stack membrane. It catalyses the reaction a beta-D-galactosyl-(1-&gt;3)-N-acetyl-beta-D-galactosaminyl derivative + CMP-N-acetyl-beta-neuraminate = an N-acetyl-alpha-neuraminyl-(2-&gt;3)-beta-D-galactosyl-(1-&gt;3)-N-acetyl-beta-D-galactosaminyl derivative + CMP + H(+). The catalysed reaction is a beta-D-galactosyl-(1-&gt;3)-N-acetyl-alpha-D-galactosaminyl derivative + CMP-N-acetyl-beta-neuraminate = an N-acetyl-alpha-neuraminyl-(2-&gt;3)-beta-D-galactosyl-(1-&gt;3)-N-acetyl-alpha-D-galactosaminyl derivative + CMP + H(+). The enzyme catalyses a beta-D-galactosyl-(1-&gt;4)-N-acetyl-beta-D-glucosaminyl derivative + CMP-N-acetyl-beta-neuraminate = an N-acetyl-alpha-neuraminyl-(2-&gt;3)-beta-D-galactosyl-(1-&gt;4)-N-acetyl-beta-D-glucosaminyl derivative + CMP + H(+). It carries out the reaction a ganglioside GM1 (d18:1(4E)) + CMP-N-acetyl-beta-neuraminate = a ganglioside GD1a (d18:1(4E)) + CMP + H(+). It catalyses the reaction a ganglioside GA1 (d18:1(4E)) + CMP-N-acetyl-beta-neuraminate = a ganglioside GM1b (d18:1(4E)) + CMP + H(+). The catalysed reaction is a ganglioside GT1c (d18:1(4E)) + CMP-N-acetyl-beta-neuraminate = a ganglioside GQ1c (d18:1(4E)) + CMP + H(+). The enzyme catalyses a neolactoside nLc4Cer + CMP-N-acetyl-beta-neuraminate = a neolactoside IV(3)-alpha-NeuAc-nLc4Cer + CMP + H(+). It carries out the reaction a neolactoside nLc4Cer(d18:1(4E)) + CMP-N-acetyl-beta-neuraminate = a neolactoside IV(3)-alpha-NeuAc-nLc4Cer(d18:1(4E)) + CMP + H(+). It functions in the pathway protein modification; protein glycosylation. Functionally, a beta-galactoside alpha2-3 sialyltransferase involved in terminal sialylation of glycoproteins and glycolipids. Catalyzes the transfer of sialic acid (N-acetyl-neuraminic acid; Neu5Ac) from the nucleotide sugar donor CMP-Neu5Ac onto acceptor Galbeta-(1-&gt;3)-GalNAc- and Galbeta-(1-&gt;4)-GlcNAc-terminated glycoconjugates through an alpha2-3 linkage. Plays a major role in hemostasis. Responsible for sialylation of plasma VWF/von Willebrand factor, preventing its recognition by asialoglycoprotein receptors (ASGPR) and subsequent clearance. Regulates ASGPR-mediated clearance of platelets. Participates in the biosynthesis of the sialyl Lewis X epitopes, both on O- and N-glycans, which are recognized by SELE/E-selectin, SELP/P-selectin and SELL/L-selectin. Essential for selectin-mediated rolling and adhesion of leukocytes during extravasation. Contributes to adhesion and transendothelial migration of neutrophils likely through terminal sialylation of CXCR2. In glycosphingolipid biosynthesis, sialylates GM1 and GA1 gangliosides to form GD1a and GM1b, respectively. Metabolizes brain c-series ganglioside GT1c forming GQ1c. Synthesizes ganglioside LM1 (IV3Neu5Ac-nLc4Cer), a major structural component of peripheral nerve myelin. In Mus musculus (Mouse), this protein is CMP-N-acetylneuraminate-beta-galactosamide-alpha-2,3-sialyltransferase 4 (St3gal4).